We begin with the raw amino-acid sequence, 151 residues long: Cytochrome c oxidase subunit 5B, mitochondrial (151 aa).

A mitochondrion-targeting transit peptide spans 1–17 (MLRTSLTKGARLTGTRF). Over 18 to 85 (VQTKALSKAT…EWGPRRPVHG (68 aa)) the chain is Mitochondrial matrix. The chain crosses the membrane as a helical span at residues 86-108 (KGDVAFITKGVFLGLGISFGLFG). The Mitochondrial intermembrane portion of the chain corresponds to 109 to 151 (LVRLLANPETPKTMNREWQLKSDEYLKSKNANPWGGYSQVQSK).

It belongs to the cytochrome c oxidase IV family. As to quaternary structure, component of the cytochrome c oxidase (complex IV, CIV), a multisubunit enzyme composed of 12 subunits. The complex is composed of a catalytic core of 3 subunits COX1, COX2 and COX3, encoded in the mitochondrial DNA, and 9 supernumerary subunits COX4, COX5A (or COX5B), COX6, COX7, COX8, COX9, COX12, COX13 and COX26, which are encoded in the nuclear genome. COX5A is the predominant subunit V during aerobic/normoxic growth, it gets replaced by COX5B under anaerobic/hypoxic conditions. The complex exists as a monomer or a dimer and forms supercomplexes (SCs) in the inner mitochondrial membrane with a dimer of ubiquinol-cytochrome c oxidoreductase (cytochrome b-c1 complex, complex III, CIII), resulting in 2 different assemblies (supercomplexes III(2)IV and III(2)IV(2)).

It localises to the mitochondrion inner membrane. It functions in the pathway energy metabolism; oxidative phosphorylation. Its function is as follows. Component of the cytochrome c oxidase, the last enzyme in the mitochondrial electron transport chain which drives oxidative phosphorylation. The respiratory chain contains 3 multisubunit complexes succinate dehydrogenase (complex II, CII), ubiquinol-cytochrome c oxidoreductase (cytochrome b-c1 complex, complex III, CIII) and cytochrome c oxidase (complex IV, CIV), that cooperate to transfer electrons derived from NADH and succinate to molecular oxygen, creating an electrochemical gradient over the inner membrane that drives transmembrane transport and the ATP synthase. Cytochrome c oxidase is the component of the respiratory chain that catalyzes the reduction of oxygen to water. Electrons originating from reduced cytochrome c in the intermembrane space (IMS) are transferred via the dinuclear copper A center (CU(A)) of COX2 and heme A of COX1 to the active site in COX1, a binuclear center (BNC) formed by heme A3 and copper B (CU(B)). The BNC reduces molecular oxygen to 2 water molecules using 4 electrons from cytochrome c in the IMS and 4 protons from the mitochondrial matrix. The protein is Cytochrome c oxidase subunit 5B, mitochondrial (COX5B) of Saccharomyces cerevisiae (strain ATCC 204508 / S288c) (Baker's yeast).